A 246-amino-acid chain; its full sequence is tRNA (guanine-N(7)-)-methyltransferase (246 aa).

Positions 1–26 (MSDSSSSSENAPATPESPGRPPRGIK) are disordered. 4 residues coordinate S-adenosyl-L-methionine: Glu74, Glu99, Asp126, and Asp149. Asp149 is an active-site residue. Residues Lys153, Asp185, and 224 to 227 (TKFE) contribute to the substrate site.

It belongs to the class I-like SAM-binding methyltransferase superfamily. TrmB family.

It catalyses the reaction guanosine(46) in tRNA + S-adenosyl-L-methionine = N(7)-methylguanosine(46) in tRNA + S-adenosyl-L-homocysteine. Its pathway is tRNA modification; N(7)-methylguanine-tRNA biosynthesis. In terms of biological role, catalyzes the formation of N(7)-methylguanine at position 46 (m7G46) in tRNA. This chain is tRNA (guanine-N(7)-)-methyltransferase, found in Chromohalobacter salexigens (strain ATCC BAA-138 / DSM 3043 / CIP 106854 / NCIMB 13768 / 1H11).